A 187-amino-acid polypeptide reads, in one-letter code: MKSGQAEIMETSKGIQKSGLMSRRIAILEFILRIVAFFNTIGSAILMGTTHETLPFFTQFIRFQAEYNDLPALTFFVVANAVVSGYLILSLTLAFVHIVKRKTQNTRILLIILDVAMLGLLTSGASSAAAIVYLAHNGNNKTNWFAICQQFNSFCERISGSLIGSFIAIVLLILLILLSAIALSRRH.

Residues 1 to 24 (MKSGQAEIMETSKGIQKSGLMSRR) lie on the Cytoplasmic side of the membrane. The helical transmembrane segment at 25–45 (IAILEFILRIVAFFNTIGSAI) threads the bilayer. Over 46-74 (LMGTTHETLPFFTQFIRFQAEYNDLPALT) the chain is Extracellular. The chain crosses the membrane as a helical span at residues 75–95 (FFVVANAVVSGYLILSLTLAF). Topologically, residues 96–107 (VHIVKRKTQNTR) are cytoplasmic. Residues 108 to 128 (ILLIILDVAMLGLLTSGASSA) form a helical membrane-spanning segment. At 129–161 (AAIVYLAHNGNNKTNWFAICQQFNSFCERISGS) the chain is on the extracellular side. Asn-140 is a glycosylation site (N-linked (GlcNAc...) asparagine). The chain crosses the membrane as a helical span at residues 162-182 (LIGSFIAIVLLILLILLSAIA). Residues 183-187 (LSRRH) are Cytoplasmic-facing.

This sequence belongs to the Casparian strip membrane proteins (CASP) family. Homodimer and heterodimers with other CASP proteins. Interacts with CASP1, CASP3 and CASP4.

It is found in the cell membrane. In terms of biological role, regulates membrane-cell wall junctions and localized cell wall deposition. Required for establishment of the Casparian strip membrane domain (CSD) and the subsequent formation of Casparian strips, a cell wall modification of the root endodermis that determines an apoplastic barrier between the intraorganismal apoplasm and the extraorganismal apoplasm and prevents lateral diffusion. The chain is Casparian strip membrane protein 5 (CASP5) from Arabidopsis thaliana (Mouse-ear cress).